Here is a 451-residue protein sequence, read N- to C-terminus: Phenylalanine-4-hydroxylase (451 aa).

Ser-16 carries the phosphoserine; by PKA modification. Residues 35-113 (SLIFSLKEEV…TVHELSRDKK (79 aa)) form the ACT domain. Residues His-284, His-289, and Glu-329 each contribute to the Fe cation site.

This sequence belongs to the biopterin-dependent aromatic amino acid hydroxylase family. In terms of assembly, homodimer and homotetramer. The cofactor is Fe(2+). In terms of processing, phosphorylation at Ser-16 increases basal activity and facilitates activation by the substrate phenylalanine.

It catalyses the reaction (6R)-L-erythro-5,6,7,8-tetrahydrobiopterin + L-phenylalanine + O2 = (4aS,6R)-4a-hydroxy-L-erythro-5,6,7,8-tetrahydrobiopterin + L-tyrosine. It functions in the pathway amino-acid degradation; L-phenylalanine degradation; acetoacetate and fumarate from L-phenylalanine: step 1/6. N-terminal region of PAH is thought to contain allosteric binding sites for phenylalanine and to constitute an 'inhibitory' domain that regulates the activity of a catalytic domain in the C-terminal portion of the molecule. In terms of biological role, catalyzes the hydroxylation of L-phenylalanine to L-tyrosine. The sequence is that of Phenylalanine-4-hydroxylase (PAH) from Bos taurus (Bovine).